A 207-amino-acid polypeptide reads, in one-letter code: Octanoyltransferase (207 aa).

The region spanning 27–202 (GETPDELWIV…HLETRLARPQ (176 aa)) is the BPL/LPL catalytic domain. Substrate contacts are provided by residues 66-73 (RGGQITYH), 133-135 (SLG), and 146-148 (GLS). Cys-164 acts as the Acyl-thioester intermediate in catalysis.

The protein belongs to the LipB family.

The protein resides in the cytoplasm. It carries out the reaction octanoyl-[ACP] + L-lysyl-[protein] = N(6)-octanoyl-L-lysyl-[protein] + holo-[ACP] + H(+). Its pathway is protein modification; protein lipoylation via endogenous pathway; protein N(6)-(lipoyl)lysine from octanoyl-[acyl-carrier-protein]: step 1/2. Functionally, catalyzes the transfer of endogenously produced octanoic acid from octanoyl-acyl-carrier-protein onto the lipoyl domains of lipoate-dependent enzymes. Lipoyl-ACP can also act as a substrate although octanoyl-ACP is likely to be the physiological substrate. In Laribacter hongkongensis (strain HLHK9), this protein is Octanoyltransferase.